The following is a 422-amino-acid chain: MLLIKNGRVMDPKSGLDQVCDVLVQDGKIIKIASEITEEGAETIDATGLVVAPGLVDIHVHFREPGQTHKEDIHTGALAAAAGGFTTVVMMANTSPTISDVETLQAVLQSAAKEKINVKTVATITKNFNGKNLTDFKALLEAGAVGFSDDGIPLESSKIVKEAMEEAKKLNTFISLHEEDPGLNGVLGFNENIAREHFHICGATGVAEYAMMARDVMIAYATKAHVHIQHLSKEESVKVVEFAQGLGAEVTAEVAPQHFSKTEALLLTQGSNAKMNPPLRLESDRRAVIEGLKSGVITVIATDHAPHHVDEKNVEDITKAPSGMTGLETSLSLSLTYLVEAGELSLMELLEKMTYNPAKLYNFEAGYLAENGPADITIFDAKADRFVDSHFASKAANSPFIGETLKGQVKYTICKGQIVYQA.

2 residues coordinate Zn(2+): H59 and H61. Residues 61–63 (HFR) and N93 contribute to the substrate site. Zn(2+) contacts are provided by D150, H177, and H230. N276 is a substrate binding site. D303 lines the Zn(2+) pocket. The active site involves D303. H307 is a substrate binding site.

Belongs to the metallo-dependent hydrolases superfamily. DHOase family. Class I DHOase subfamily. Zn(2+) serves as cofactor.

It catalyses the reaction (S)-dihydroorotate + H2O = N-carbamoyl-L-aspartate + H(+). It participates in pyrimidine metabolism; UMP biosynthesis via de novo pathway; (S)-dihydroorotate from bicarbonate: step 3/3. Catalyzes the reversible cyclization of carbamoyl aspartate to dihydroorotate. This Streptococcus pneumoniae serotype 4 (strain ATCC BAA-334 / TIGR4) protein is Dihydroorotase.